A 1128-amino-acid chain; its full sequence is Nck-associated protein 1 (1128 aa).

The disordered stretch occupies residues 640-665 (AVNKKSKKQTGKKGEPEREKPGVESM). A compositionally biased stretch (basic and acidic residues) spans 651 to 665 (KKGEPEREKPGVESM). A helical membrane pass occupies residues 995–1015 (IACLLMVFVAVSMPTLASNVM).

Belongs to the HEM-1/HEM-2 family.

It is found in the cell membrane. The protein resides in the cell projection. It localises to the lamellipodium membrane. Functionally, part of the WAVE complex that regulates lamellipodia formation. The WAVE complex regulates actin filament reorganization via its interaction with the Arp2/3 complex. Actin remodeling activity is regulated by RAC1. Plays a role in neural tube closure. The protein is Nck-associated protein 1 (nckap1) of Danio rerio (Zebrafish).